The primary structure comprises 501 residues: Dipeptide and tripeptide permease B (501 aa).

Residues Met-1 to Arg-27 are Cytoplasmic-facing. The chain crosses the membrane as a helical span at residues Phe-28–Ser-48. Topologically, residues Gln-49–Ser-52 are periplasmic. A helical membrane pass occupies residues Phe-53–Val-73. Residues Gly-74–Arg-82 are Cytoplasmic-facing. The helical transmembrane segment at Thr-83–Tyr-103 threads the bilayer. At Asn-104–Asp-106 the chain is on the periplasmic side. The helical transmembrane segment at Leu-107 to Ala-127 threads the bilayer. Topologically, residues Ser-128–Thr-146 are cytoplasmic. A helical transmembrane segment spans residues Leu-147 to Ala-167. Over Asp-168–Tyr-172 the chain is Periplasmic. Residues Thr-173–Cys-193 traverse the membrane as a helical segment. Topologically, residues Arg-194–Tyr-211 are cytoplasmic. Residues Gly-212–Met-232 traverse the membrane as a helical segment. A topological domain (periplasmic) is located at residue His-233. Residues His-234–Phe-254 form a helical membrane-spanning segment. The Cytoplasmic segment spans residues Arg-255–Lys-267. Residues Met-268–Met-288 form a helical membrane-spanning segment. Over Pro-289–Pro-311 the chain is Periplasmic. Residues Ile-312–Ile-332 traverse the membrane as a helical segment. Residues Tyr-333 to Thr-350 lie on the Cytoplasmic side of the membrane. A helical transmembrane segment spans residues Leu-351–Ala-371. The Periplasmic segment spans residues Asp-372 to Trp-380. A helical transmembrane segment spans residues Phe-381–Leu-401. Over Ala-402–Arg-411 the chain is Cytoplasmic. Residues Leu-412–Gly-432 traverse the membrane as a helical segment. Over Tyr-433–Asp-456 the chain is Periplasmic. A helical membrane pass occupies residues Val-457–Pro-477. Residues Trp-478 to Ala-501 lie on the Cytoplasmic side of the membrane.

Belongs to the major facilitator superfamily. Proton-dependent oligopeptide transporter (POT/PTR) (TC 2.A.17) family. DtpB subfamily.

Its subcellular location is the cell inner membrane. In terms of biological role, proton-dependent permease that transports di- and tripeptides. This chain is Dipeptide and tripeptide permease B, found in Aeromonas hydrophila subsp. hydrophila (strain ATCC 7966 / DSM 30187 / BCRC 13018 / CCUG 14551 / JCM 1027 / KCTC 2358 / NCIMB 9240 / NCTC 8049).